A 338-amino-acid polypeptide reads, in one-letter code: D-erythrose-4-phosphate dehydrogenase (338 aa).

12–13 (RI) contacts NAD(+). Substrate contacts are provided by residues 154 to 156 (SCT), Arg200, 213 to 214 (TK), and Arg236. The active-site Nucleophile is the Cys155. Asn318 contacts NAD(+).

The protein belongs to the glyceraldehyde-3-phosphate dehydrogenase family. Epd subfamily. As to quaternary structure, homotetramer.

The protein resides in the cytoplasm. The catalysed reaction is D-erythrose 4-phosphate + NAD(+) + H2O = 4-phospho-D-erythronate + NADH + 2 H(+). The protein operates within cofactor biosynthesis; pyridoxine 5'-phosphate biosynthesis; pyridoxine 5'-phosphate from D-erythrose 4-phosphate: step 1/5. Functionally, catalyzes the NAD-dependent conversion of D-erythrose 4-phosphate to 4-phosphoerythronate. This is D-erythrose-4-phosphate dehydrogenase from Yersinia pestis bv. Antiqua (strain Antiqua).